The chain runs to 155 residues: Large ribosomal subunit protein uL30 (155 aa).

Belongs to the universal ribosomal protein uL30 family. In terms of assembly, part of the 50S ribosomal subunit.

This Pyrococcus furiosus (strain ATCC 43587 / DSM 3638 / JCM 8422 / Vc1) protein is Large ribosomal subunit protein uL30.